The sequence spans 350 residues: Small ribosomal subunit biogenesis GTPase RsgA (350 aa).

Residues 1-17 are compositionally biased toward polar residues; sequence MSKNKLSKGQQRRVNAN. The interval 1 to 27 is disordered; it reads MSKNKLSKGQQRRVNANHQRRLKTSAE. The CP-type G domain occupies 104-273; that stretch reads TSVLTRPDFY…VIDSPGVREF (170 aa). GTP contacts are provided by residues 160-163 and 214-222; these read NKID and GQSGVGKSS. Zn(2+) contacts are provided by C297, C302, H304, and C310.

The protein belongs to the TRAFAC class YlqF/YawG GTPase family. RsgA subfamily. Monomer. Associates with 30S ribosomal subunit, binds 16S rRNA. It depends on Zn(2+) as a cofactor.

The protein localises to the cytoplasm. One of several proteins that assist in the late maturation steps of the functional core of the 30S ribosomal subunit. Helps release RbfA from mature subunits. May play a role in the assembly of ribosomal proteins into the subunit. Circularly permuted GTPase that catalyzes slow GTP hydrolysis, GTPase activity is stimulated by the 30S ribosomal subunit. This Salmonella typhi protein is Small ribosomal subunit biogenesis GTPase RsgA.